The chain runs to 115 residues: Large ribosomal subunit protein uL24 (115 aa).

It belongs to the universal ribosomal protein uL24 family. Part of the 50S ribosomal subunit.

Functionally, one of two assembly initiator proteins, it binds directly to the 5'-end of the 23S rRNA, where it nucleates assembly of the 50S subunit. One of the proteins that surrounds the polypeptide exit tunnel on the outside of the subunit. The polypeptide is Large ribosomal subunit protein uL24 (Phytoplasma mali (strain AT)).